Consider the following 1207-residue polypeptide: RNA-binding protein 20 (1207 aa).

The segment at 1 to 58 (MVLAAAMSQDADPSGPEQPDRDACIVPGVQGPPAPQGQQGMQPLPPPLPPPPQPQSSL) is disordered. Residues 43–54 (PLPPPLPPPPQP) show a composition bias toward pro residues. A U1-type zinc finger spans residues 412 to 446 (HLPHICSICDKKVFDLKDWELHVKGKLHAQKCLLF). The region spanning 521–596 (RVVHICNLPE…EKLLIRMSTR (76 aa)) is the RRM domain. A compositionally biased stretch (basic and acidic residues) spans 625 to 637 (LREADRYGPERPR). Disordered regions lie at residues 625 to 686 (LREA…NGED), 722 to 896 (EKYL…MEEL), and 951 to 1110 (QGET…AELK). Residues 631–650 (YGPERPRSRSPMSRSLSPRS) form an RS region. A phosphoserine mark is found at Ser-638, Ser-640, Ser-643, Ser-645, and Ser-652. The span at 639–650 (RSPMSRSLSPRS) shows a compositional bias: low complexity. Positions 668–686 (YAWRDEDRETVPRRENGED) are enriched in basic and acidic residues. Position 729 is a phosphoserine (Ser-729). 3 stretches are compositionally biased toward basic and acidic residues: residues 740 to 759 (KGRE…DKHP), 772 to 789 (RKEE…PEDS), and 796 to 836 (EPKV…RGAE). Ser-789 is modified (phosphoserine). A compositionally biased stretch (acidic residues) spans 839–848 (AGTEEQEGME). Phosphoserine is present on residues Ser-853 and Ser-864. Polar residues predominate over residues 853 to 863 (SVGTQQEGTES). The segment covering 867–876 (ENTRTKKGQD) has biased composition (basic and acidic residues). Residues Ser-879, Ser-881, and Ser-963 each carry the phosphoserine modification. Over residues 970 to 979 (VPSTSTSCPN) the composition is skewed to polar residues. Ser-999 carries the post-translational modification Phosphoserine. The span at 1011-1022 (YEKEARGAEGSD) shows a compositional bias: basic and acidic residues. Phosphoserine is present on residues Ser-1034, Ser-1046, Ser-1057, Ser-1066, Ser-1078, Ser-1096, and Ser-1101. Residues 1050-1072 (DDCKARGSPEDGPHEVSPLEEKA) show a composition bias toward basic and acidic residues. A compositionally biased stretch (polar residues) spans 1073-1102 (SPTTESDLQSQACQENSRYTETRSLNSRSP). A Matrin-type zinc finger spans residues 1141 to 1172 (FYCKLCGLFYTSEEAAKVSHCRSTVHYRNLQK). Residues 1181 to 1207 (GLKETEGVDSPSPERSGIGPHLERKKL) form a disordered region. Phosphoserine occurs at positions 1190 and 1192.

As to quaternary structure, associates with components of the U1 and U2 U1 small nuclear ribonucleoprotein complexes. In terms of processing, phosphorylation regulates the subcellular localization. Phosphorylation of Ser-638 and Ser-640 in the RS (arginine/serine-rich) region promotes nuclear localization of the protein. In contrast, phosphorylation of the C-terminal disordered region promotes localization to cytoplasmic ribonucleoprotein granules.

It localises to the nucleus. The protein resides in the cytoplasm. Its subcellular location is the cytoplasmic ribonucleoprotein granule. Its function is as follows. RNA-binding protein that acts as a regulator of mRNA splicing of a subset of genes encoding key structural proteins involved in cardiac development, such as TTN (Titin), CACNA1C, CAMK2D or PDLIM5/ENH. Acts as a repressor of mRNA splicing: specifically binds the 5'UCUU-3' motif that is predominantly found within intronic sequences of pre-mRNAs, leading to the exclusion of specific exons in target transcripts. RBM20-mediated exon skipping is hormone-dependent and is essential for TTN isoform transition in both cardiac and skeletal muscles. RBM20-mediated exon skipping of TTN provides substrates for the formation of circular RNA (circRNAs) from the TTN transcripts. Together with RBM24, promotes the expression of short isoforms of PDLIM5/ENH in cardiomyocytes. The polypeptide is RNA-binding protein 20 (Rattus norvegicus (Rat)).